The following is a 294-amino-acid chain: Dolichol-phosphate mannosyltransferase (294 aa).

The disordered stretch occupies residues 1–27 (MSIALDMDASAKMRKQPGSSGWSTSST). Residues 1–263 (MSIALDMDAS…QQLVELYRFR (263 aa)) lie on the Cytoplasmic side of the membrane. A compositionally biased stretch (low complexity) spans 17–27 (PGSSGWSTSST). Residues Pro35, Glu39, Val70, Asp72, Asp123, Ala124, Asp125, Gln127, Arg151, Lys211, Arg237, and Lys243 each coordinate GDP-alpha-D-mannose. 2 residues coordinate Mg(2+): Asp125 and Gln127. 2 residues coordinate Mn(2+): Asp125 and Gln127. A helical transmembrane segment spans residues 264-284 (FGTVPIVFVLIVLLVLALYIW). Over 285–294 (SHVLAPMLGA) the chain is Lumenal.

The protein belongs to the glycosyltransferase 2 family. It depends on Mg(2+) as a cofactor. Mn(2+) serves as cofactor. Requires Ca(2+) as cofactor.

It is found in the endoplasmic reticulum membrane. It carries out the reaction a di-trans,poly-cis-dolichyl phosphate + GDP-alpha-D-mannose = a di-trans,poly-cis-dolichyl beta-D-mannosyl phosphate + GDP. It participates in protein modification; protein glycosylation. Functionally, transfers mannose from GDP-mannose to dolichol monophosphate to form dolichol phosphate mannose (Dol-P-Man) which is the mannosyl donor in pathways leading to N-glycosylation, glycosyl phosphatidylinositol membrane anchoring, and O-mannosylation of proteins. The protein is Dolichol-phosphate mannosyltransferase (DPM1) of Mycosarcoma maydis (Corn smut fungus).